The chain runs to 110 residues: Large ribosomal subunit protein uL24 (110 aa).

Belongs to the universal ribosomal protein uL24 family. In terms of assembly, part of the 50S ribosomal subunit.

Its function is as follows. One of two assembly initiator proteins, it binds directly to the 5'-end of the 23S rRNA, where it nucleates assembly of the 50S subunit. In terms of biological role, one of the proteins that surrounds the polypeptide exit tunnel on the outside of the subunit. The polypeptide is Large ribosomal subunit protein uL24 (Chloroflexus aurantiacus (strain ATCC 29366 / DSM 635 / J-10-fl)).